Reading from the N-terminus, the 126-residue chain is Large ribosomal subunit protein bL20 (126 aa).

Belongs to the bacterial ribosomal protein bL20 family.

Functionally, binds directly to 23S ribosomal RNA and is necessary for the in vitro assembly process of the 50S ribosomal subunit. It is not involved in the protein synthesizing functions of that subunit. This Acholeplasma laidlawii (strain PG-8A) protein is Large ribosomal subunit protein bL20.